The chain runs to 355 residues: Galectin-9 (355 aa).

Galectin domains lie at 17-148 and 227-355; these read FSGT…ISFQ and FITT…HVQT. Residues Asn48, His61, Arg65, Asn75, 82-88, His267, Arg271, Thr281, and 287-293 contribute to the a beta-D-galactoside site; these read WGPEERK and WGSEERS.

In terms of assembly, monomer. In terms of tissue distribution, peripheral blood leukocytes and lymphatic tissues. Expressed in lung, liver, breast and kidney with higher levels in tumor endothelial cells than normal endothelium (at protein level). Expressed in trophoblast cells in decidua and placenta in pregnancy (at protein level). Isoform 2 is the most abundant isoform expressed in endothelial cells. Upon endothelial cell activation isoform 2 expression decreases while expression of isoform 3 and isoform 5 increases. Isoform 4 decreases in pathological pregnancy.

Its subcellular location is the cytoplasm. The protein resides in the nucleus. The protein localises to the secreted. In terms of biological role, binds galactosides. Has high affinity for the Forssman pentasaccharide. Ligand for HAVCR2/TIM3. Binding to HAVCR2 induces T-helper type 1 lymphocyte (Th1) death. Also stimulates bactericidal activity in infected macrophages by causing macrophage activation and IL1B secretion which restricts intracellular bacterial growth. Ligand for P4HB; the interaction retains P4HB at the cell surface of Th2 T-helper cells, increasing disulfide reductase activity at the plasma membrane, altering the plasma membrane redox state and enhancing cell migration. Ligand for CD44; the interaction enhances binding of SMAD3 to the FOXP3 promoter, leading to up-regulation of FOXP3 expression and increased induced regulatory T (iTreg) cell stability and suppressive function. Promotes ability of mesenchymal stromal cells to suppress T-cell proliferation. Expands regulatory T-cells and induces cytotoxic T-cell apoptosis following virus infection. Activates ERK1/2 phosphorylation inducing cytokine (IL-6, IL-8, IL-12) and chemokine (CCL2) production in mast and dendritic cells. Inhibits degranulation and induces apoptosis of mast cells. Induces maturation and migration of dendritic cells. Inhibits natural killer (NK) cell function. Can transform NK cell phenotype from peripheral to decidual during pregnancy. Astrocyte derived galectin-9 enhances microglial TNF production. May play a role in thymocyte-epithelial interactions relevant to the biology of the thymus. May provide the molecular basis for urate flux across cell membranes, allowing urate that is formed during purine metabolism to efflux from cells and serving as an electrogenic transporter that plays an important role in renal and gastrointestinal urate excretion. Highly selective to the anion urate. Functionally, acts as an eosinophil chemoattractant. It also inhibits angiogenesis. Suppresses IFNG production by natural killer cells. This is Galectin-9 (LGALS9) from Homo sapiens (Human).